We begin with the raw amino-acid sequence, 1446 residues long: DNA polymerase III PolC-type (1446 aa).

The Exonuclease domain occupies 425–581; the sequence is YVIFDVETTG…ADAESTGYLL (157 aa).

Belongs to the DNA polymerase type-C family. PolC subfamily.

It is found in the cytoplasm. It catalyses the reaction DNA(n) + a 2'-deoxyribonucleoside 5'-triphosphate = DNA(n+1) + diphosphate. Functionally, required for replicative DNA synthesis. This DNA polymerase also exhibits 3' to 5' exonuclease activity. The polypeptide is DNA polymerase III PolC-type (Latilactobacillus sakei subsp. sakei (strain 23K) (Lactobacillus sakei subsp. sakei)).